A 91-amino-acid polypeptide reads, in one-letter code: Small ribosomal subunit protein bS20 (91 aa).

Residues 1-23 (MANTSSAKKATRKIARRTEVNKA) form a disordered region.

The protein belongs to the bacterial ribosomal protein bS20 family.

Functionally, binds directly to 16S ribosomal RNA. This chain is Small ribosomal subunit protein bS20, found in Rhizobium rhizogenes (strain K84 / ATCC BAA-868) (Agrobacterium radiobacter).